The primary structure comprises 332 residues: Fructose-1,6-bisphosphatase class 1 (332 aa).

Mg(2+) contacts are provided by Glu89, Asp110, Leu112, and Asp113. Residues 113–116, Asn206, Tyr239, 257–259, and Lys269 contribute to the substrate site; these read DGSS and YLY. Residue Glu275 coordinates Mg(2+).

The protein belongs to the FBPase class 1 family. As to quaternary structure, homotetramer. The cofactor is Mg(2+).

The protein localises to the cytoplasm. The enzyme catalyses beta-D-fructose 1,6-bisphosphate + H2O = beta-D-fructose 6-phosphate + phosphate. Its pathway is carbohydrate biosynthesis; gluconeogenesis. The protein is Fructose-1,6-bisphosphatase class 1 of Salmonella typhimurium (strain LT2 / SGSC1412 / ATCC 700720).